A 349-amino-acid chain; its full sequence is Phosphate acetyltransferase (349 aa).

The protein belongs to the phosphate acetyltransferase and butyryltransferase family.

It localises to the cytoplasm. It catalyses the reaction acetyl-CoA + phosphate = acetyl phosphate + CoA. Its pathway is metabolic intermediate biosynthesis; acetyl-CoA biosynthesis; acetyl-CoA from acetate: step 2/2. The polypeptide is Phosphate acetyltransferase (pta) (Rickettsia typhi (strain ATCC VR-144 / Wilmington)).